Here is a 433-residue protein sequence, read N- to C-terminus: MNKPETVTENSLASDVAGPAPRHQTTKVMVGNVAVGGGAPIVVQSMTNTDTADVDSTVAQVAALARAGSEMVRITVDRDEAAAAVPHIREQLDKRGITTPLIGDFHYIGHKLLTEYPACAEALAKYRINPGNVGFKDKRDTQFSTIIELANKYGKPVRIGANWGSLDQELLSKLMDENAASANPRNARAVMREAMVQSALHSAERAQELGMPKDRIILSAKVSAVQDLIAVYQDLAARSDYAIHLGLTEAGMGSKGIVASSAALGILLQQGIGDTIRISLTPEPGGDRTLEVQVAQELLQTMGFRTFVPLVAACPGCGRTTSTTFQELARSIQDFIRDEMPTWKIKYPGVEALNVAVMGCIVNGPGESKHANIGISLPGTGEAPAAPVFVDGKKFRTLRGPTIAADFKALVIDYIDQRYGSGAKAPESVTAAE.

Over residues 1–13 (MNKPETVTENSLA) the composition is skewed to polar residues. The segment at 1 to 23 (MNKPETVTENSLASDVAGPAPRH) is disordered. [4Fe-4S] cluster contacts are provided by cysteine 314, cysteine 317, cysteine 360, and glutamate 367.

It belongs to the IspG family. [4Fe-4S] cluster is required as a cofactor.

It catalyses the reaction (2E)-4-hydroxy-3-methylbut-2-enyl diphosphate + oxidized [flavodoxin] + H2O + 2 H(+) = 2-C-methyl-D-erythritol 2,4-cyclic diphosphate + reduced [flavodoxin]. It functions in the pathway isoprenoid biosynthesis; isopentenyl diphosphate biosynthesis via DXP pathway; isopentenyl diphosphate from 1-deoxy-D-xylulose 5-phosphate: step 5/6. In terms of biological role, converts 2C-methyl-D-erythritol 2,4-cyclodiphosphate (ME-2,4cPP) into 1-hydroxy-2-methyl-2-(E)-butenyl 4-diphosphate. The polypeptide is 4-hydroxy-3-methylbut-2-en-1-yl diphosphate synthase (flavodoxin) (Bradyrhizobium sp. (strain ORS 278)).